The sequence spans 127 residues: Fluoride-specific ion channel FluC 1 (127 aa).

Transmembrane regions (helical) follow at residues 4 to 24, 35 to 55, 71 to 91, and 101 to 121; these read TLLA…LVSL, VGTL…LALF, TGFC…VYLI, and GTIL…FILV. Na(+) is bound by residues Gly-75 and Thr-78.

Belongs to the fluoride channel Fluc/FEX (TC 1.A.43) family.

The protein resides in the cell inner membrane. It catalyses the reaction fluoride(in) = fluoride(out). Na(+) is not transported, but it plays an essential structural role and its presence is essential for fluoride channel function. Functionally, fluoride-specific ion channel. Important for reducing fluoride concentration in the cell, thus reducing its toxicity. This Yersinia pseudotuberculosis serotype I (strain IP32953) protein is Fluoride-specific ion channel FluC 1.